A 640-amino-acid chain; its full sequence is Chaperone protein dnaK2 (640 aa).

Position 197 is a phosphothreonine; by autocatalysis (Thr197). Positions 605 to 640 (VYQSAQSSDGTGSSSSGGSGSGGDDEVIDAEFSETK) are disordered. Acidic residues predominate over residues 627–640 (GDDEVIDAEFSETK).

Belongs to the heat shock protein 70 family.

In terms of biological role, acts as a chaperone. The polypeptide is Chaperone protein dnaK2 (dnaK2) (Thermosynechococcus vestitus (strain NIES-2133 / IAM M-273 / BP-1)).